The chain runs to 88 residues: ATP synthase F(0) complex subunit f, mitochondrial (88 aa).

Alanine 2 carries the N-acetylalanine modification. The residue at position 3 (serine 3) is a Phosphoserine. Lysine 16 bears the N6-acetyllysine mark. The chain crosses the membrane as a helical span at residues 62-79 (MVLAAYVFLNYCRSYKEL).

Component of the ATP synthase complex composed at least of ATP5F1A/subunit alpha, ATP5F1B/subunit beta, ATP5MC1/subunit c (homooctomer), MT-ATP6/subunit a, MT-ATP8/subunit 8, ATP5ME/subunit e, ATP5MF/subunit f, ATP5MG/subunit g, ATP5MK/subunit k, ATP5MJ/subunit j, ATP5F1C/subunit gamma, ATP5F1D/subunit delta, ATP5F1E/subunit epsilon, ATP5PF/subunit F6, ATP5PB/subunit b, ATP5PD/subunit d, ATP5PO/subunit OSCP. ATP synthase complex consists of a soluble F(1) head domain (subunits alpha(3) and beta(3)) - the catalytic core - and a membrane F(0) domain - the membrane proton channel (subunits c, a, 8, e, f, g, k and j). These two domains are linked by a central stalk (subunits gamma, delta, and epsilon) rotating inside the F1 region and a stationary peripheral stalk (subunits F6, b, d, and OSCP).

It localises to the mitochondrion. Its subcellular location is the mitochondrion inner membrane. Its function is as follows. Subunit f, of the mitochondrial membrane ATP synthase complex (F(1)F(0) ATP synthase or Complex V) that produces ATP from ADP in the presence of a proton gradient across the membrane which is generated by electron transport complexes of the respiratory chain. ATP synthase complex consist of a soluble F(1) head domain - the catalytic core - and a membrane F(1) domain - the membrane proton channel. These two domains are linked by a central stalk rotating inside the F(1) region and a stationary peripheral stalk. During catalysis, ATP synthesis in the catalytic domain of F(1) is coupled via a rotary mechanism of the central stalk subunits to proton translocation. In vivo, can only synthesize ATP although its ATP hydrolase activity can be activated artificially in vitro. Part of the complex F(0) domain. The protein is ATP synthase F(0) complex subunit f, mitochondrial of Bos taurus (Bovine).